The sequence spans 299 residues: Protoheme IX farnesyltransferase (299 aa).

Helical transmembrane passes span 25–45 (VVLL…RAGV), 47–67 (WTVL…AAAV), 95–115 (AAAL…LLTF), 119–139 (LAAW…TGFL), 147–167 (IVIG…AVTG), 173–193 (PLLL…ALAI), 218–238 (VHIL…FAIH), 243–263 (LYLA…IALY), and 277–297 (FSIW…YLLL).

Belongs to the UbiA prenyltransferase family. Protoheme IX farnesyltransferase subfamily.

Its subcellular location is the cell inner membrane. It carries out the reaction heme b + (2E,6E)-farnesyl diphosphate + H2O = Fe(II)-heme o + diphosphate. Its pathway is porphyrin-containing compound metabolism; heme O biosynthesis; heme O from protoheme: step 1/1. Functionally, converts heme B (protoheme IX) to heme O by substitution of the vinyl group on carbon 2 of heme B porphyrin ring with a hydroxyethyl farnesyl side group. This chain is Protoheme IX farnesyltransferase, found in Stutzerimonas stutzeri (strain A1501) (Pseudomonas stutzeri).